A 182-amino-acid polypeptide reads, in one-letter code: Isopentenyl-diphosphate Delta-isomerase (182 aa).

Positions 25 and 32 each coordinate Mn(2+). Residues 30–164 (LLHLAFSSWL…PWAFSPWMVM (135 aa)) enclose the Nudix hydrolase domain. Cys-67 is a catalytic residue. His-69 is a Mn(2+) binding site. Residue Glu-87 coordinates Mg(2+). Glu-114 and Glu-116 together coordinate Mn(2+). The active site involves Glu-116.

It belongs to the IPP isomerase type 1 family. Homodimer. It depends on Mg(2+) as a cofactor. The cofactor is Mn(2+).

The protein localises to the cytoplasm. It catalyses the reaction isopentenyl diphosphate = dimethylallyl diphosphate. It participates in isoprenoid biosynthesis; dimethylallyl diphosphate biosynthesis; dimethylallyl diphosphate from isopentenyl diphosphate: step 1/1. Functionally, catalyzes the 1,3-allylic rearrangement of the homoallylic substrate isopentenyl (IPP) to its highly electrophilic allylic isomer, dimethylallyl diphosphate (DMAPP). In Escherichia coli O9:H4 (strain HS), this protein is Isopentenyl-diphosphate Delta-isomerase.